Consider the following 60-residue polypeptide: Large ribosomal subunit protein uL30 (60 aa).

This sequence belongs to the universal ribosomal protein uL30 family. As to quaternary structure, part of the 50S ribosomal subunit.

In Acidovorax ebreus (strain TPSY) (Diaphorobacter sp. (strain TPSY)), this protein is Large ribosomal subunit protein uL30.